Consider the following 408-residue polypeptide: MTQQKMDIKNVVLAYSGGLDTSIILKWLKNEYGCRVVAFSADLGQGEELDPVREKALATGADVVYIDDLREEFVRDFVFPMFRANAIYEGHYLLGTSIARPLIAKRQMEIAAKEGCDAVSHGSTGKGNDQVRFELGYYHFNPNIKIVAPWRTWDLNSRQALIDYAKKNGIPVPVTKKRPWSSDRNLLHISFEGGILEDTWAEAPEEMYVLTTAPEKAPNKPQYVEIEFKNGNAVAVDGEKMTPAQLLAHLNYLGGQHGIGRVDLLENRSVGMKSRGVYETPGGTILREAHMAVEQITMDREVMRIRDGLIPEYARLVYAGYWFSPEREMLQALIDDSQKCVNGVARLKLYKGYCRTVGRKSDTDSLFNQDFATFEKDQVYNQADAEGFIRINSLRLRIRSMMQAAKKK.

ATP-binding positions include 14–22 (AYSGGLDTS) and Ala-41. Residues Tyr-92 and Ser-97 each coordinate L-citrulline. Gly-122 is a binding site for ATP. L-aspartate contacts are provided by Thr-124, Asn-128, and Asp-129. Asn-128 is a binding site for L-citrulline. Residues Arg-132, Ser-181, Ser-190, Glu-266, and Tyr-278 each contribute to the L-citrulline site.

Belongs to the argininosuccinate synthase family. Type 1 subfamily. As to quaternary structure, homotetramer.

It localises to the cytoplasm. It catalyses the reaction L-citrulline + L-aspartate + ATP = 2-(N(omega)-L-arginino)succinate + AMP + diphosphate + H(+). It participates in amino-acid biosynthesis; L-arginine biosynthesis; L-arginine from L-ornithine and carbamoyl phosphate: step 2/3. This Pelobacter propionicus (strain DSM 2379 / NBRC 103807 / OttBd1) protein is Argininosuccinate synthase.